The chain runs to 363 residues: Flagellar P-ring protein 2 (363 aa).

The N-terminal stretch at 1 to 20 (MKLRTCCISLMLLLALPLQA) is a signal peptide.

It belongs to the FlgI family. The basal body constitutes a major portion of the flagellar organelle and consists of four rings (L,P,S, and M) mounted on a central rod.

The protein localises to the periplasm. It is found in the bacterial flagellum basal body. Assembles around the rod to form the L-ring and probably protects the motor/basal body from shearing forces during rotation. The sequence is that of Flagellar P-ring protein 2 from Photobacterium profundum (strain SS9).